Reading from the N-terminus, the 70-residue chain is Small ribosomal subunit protein bS21 (70 aa).

The protein belongs to the bacterial ribosomal protein bS21 family.

In Nitratidesulfovibrio vulgaris (strain ATCC 29579 / DSM 644 / CCUG 34227 / NCIMB 8303 / VKM B-1760 / Hildenborough) (Desulfovibrio vulgaris), this protein is Small ribosomal subunit protein bS21.